Here is a 577-residue protein sequence, read N- to C-terminus: Outer spore wall assembly protein SHE10 (577 aa).

The signal sequence occupies residues 1–23 (MGKLIKLITTLTVLVSLLQYCCE). 2 coiled-coil regions span residues 379 to 416 (NETR…ENVE) and 513 to 561 (ILRS…EEDV). Positions 525–545 (RERKERERKEREKAAAEEFQR) are enriched in basic and acidic residues. The tract at residues 525 to 577 (RERKERERKEREKAAAEEFQRQQELLLQQEEEDEEDVSYTSTSTITTTTTMTL) is disordered. Positions 562-577 (SYTSTSTITTTTTMTL) are enriched in low complexity.

Belongs to the SHE10 family. Component of the mitochondria-localized RNase mitochondrial RNA-processing (RNase MRP) composed of one single RNA encoded by the NME1 gene and at least 31 proteins. Absent in the nucleus-localized RNase MRP (NuMRP).

The protein localises to the mitochondrion. Involved in spore wall assembly. May be a component of the mitochondrial RNase MRP (MtMRP), a ribonucleoprotein endoribonuclease involved in the cleaving RNA transcripts to generate primers for DNA replication in mitochondria. The polypeptide is Outer spore wall assembly protein SHE10 (Saccharomyces cerevisiae (strain JAY291) (Baker's yeast)).